The primary structure comprises 598 residues: UvrABC system protein C (598 aa).

Residues 14–91 enclose the GIY-YIG domain; the sequence is DSPGCYLHKD…IQKNMPKYNI (78 aa). The 36-residue stretch at 196–231 folds into the UVR domain; it reads DKIIEDLRSKMLAASEEMAFERAAEYRDLISGIATM.

This sequence belongs to the UvrC family. As to quaternary structure, interacts with UvrB in an incision complex.

The protein resides in the cytoplasm. In terms of biological role, the UvrABC repair system catalyzes the recognition and processing of DNA lesions. UvrC both incises the 5' and 3' sides of the lesion. The N-terminal half is responsible for the 3' incision and the C-terminal half is responsible for the 5' incision. This Streptococcus pyogenes serotype M5 (strain Manfredo) protein is UvrABC system protein C.